The primary structure comprises 355 residues: Heterogeneous nuclear ribonucleoprotein D0 (355 aa).

Residues 1 to 92 form a disordered region; sequence MSEEQFGGDG…SPRHSEAATA (92 aa). Ser2 bears the N-acetylserine mark. 2 stretches are compositionally biased toward low complexity: residues 11-20 and 27-42; these read AAAAATAAVG and EGAM…AAAG. Over residues 43–58 the composition is skewed to gly residues; the sequence is SGAGTGGGTASGGTEG. The span at 64–73 shows a compositional bias: basic and acidic residues; sequence EGAKIDASKN. The residue at position 71 (Ser71) is a Phosphoserine. Residue Lys72 forms a Glycyl lysine isopeptide (Lys-Gly) (interchain with G-Cter in SUMO2) linkage. Ser80, Ser82, and Ser83 each carry phosphoserine. The residue at position 91 (Thr91) is a Phosphothreonine. RRM domains are found at residues 97-179 and 182-261; these read WKMF…KTKE and KKIF…MSKE. The residue at position 119 (Lys119) is an N6-methyllysine. Thr127 is modified (phosphothreonine). Lys129 participates in a covalent cross-link: Glycyl lysine isopeptide (Lys-Gly) (interchain with G-Cter in SUMO2). N6-acetyllysine is present on Lys165. Residue Ser190 is modified to Phosphoserine. Thr193 carries the phosphothreonine modification. Lys197 is covalently cross-linked (Glycyl lysine isopeptide (Lys-Gly) (interchain with G-Cter in SUMO2)). Lys243 and Lys251 each carry N6-acetyllysine. Tyr263 bears the Omega-N-methylarginine mark. The residue at position 271 (Ser271) is a Phosphoserine. Arg272 carries the omega-N-methylarginine modification. Gly273 bears the N6-acetyllysine mark. Omega-N-methylarginine occurs at positions 278, 280, and 282. Gln292 is subject to N6-acetyllysine. Arg345 carries the asymmetric dimethylarginine; alternate modification. Residue Arg345 is modified to Dimethylated arginine; alternate. Omega-N-methylarginine; alternate is present on Arg345.

As to quaternary structure, identified in a IGF2BP1-dependent mRNP granule complex containing untranslated mRNAs. Part of a complex associated with the FOS mCRD domain and consisting of PABPC1, PAIP1, CSDE1/UNR and SYNCRIP. Interacts with IGF2BP2. Interacts with GTPBP1. Interacts with EIF4G1; the interaction requires RNA. Interacts with EIF3B and RPS3. In terms of processing, arg-345 is dimethylated, probably to asymmetric dimethylarginine. Post-translationally, methylated by PRMT1, in an insulin-dependent manner. The PRMT1-mediated methylation regulates tyrosine phosphorylation.

Its subcellular location is the nucleus. It is found in the cytoplasm. Its function is as follows. Binds with high affinity to RNA molecules that contain AU-rich elements (AREs) found within the 3'-UTR of many proto-oncogenes and cytokine mRNAs. Also binds to double- and single-stranded DNA sequences in a specific manner and functions a transcription factor. Each of the RNA-binding domains specifically can bind solely to a single-stranded non-monotonous 5'-UUAG-3' sequence and also weaker to the single-stranded 5'-TTAGGG-3' telomeric DNA repeat. Binds RNA oligonucleotides with 5'-UUAGGG-3' repeats more tightly than the telomeric single-stranded DNA 5'-TTAGGG-3' repeats. Binding of RRM1 to DNA inhibits the formation of DNA quadruplex structure which may play a role in telomere elongation. May be involved in translationally coupled mRNA turnover. Implicated with other RNA-binding proteins in the cytoplasmic deadenylation/translational and decay interplay of the FOS mRNA mediated by the major coding-region determinant of instability (mCRD) domain. May play a role in the regulation of the rhythmic expression of circadian clock core genes. Directly binds to the 3'UTR of CRY1 mRNA and induces CRY1 rhythmic translation. May also be involved in the regulation of PER2 translation. This Homo sapiens (Human) protein is Heterogeneous nuclear ribonucleoprotein D0 (HNRNPD).